Consider the following 82-residue polypeptide: Cobrotoxin-b (82 aa).

Positions 1–21 (MKTLLLTLLVVTIVCLDLGYT) are cleaved as a signal peptide. Intrachain disulfides connect Cys24/Cys44, Cys38/Cys61, Cys63/Cys74, and Cys75/Cys80.

Belongs to the three-finger toxin family. Short-chain subfamily. Type I alpha-neurotoxin sub-subfamily. Expressed by the venom gland.

The protein resides in the secreted. Functionally, binds to muscle nicotinic acetylcholine receptor (nAChR) and inhibit acetylcholine from binding to the receptor, thereby impairing neuromuscular transmission. Produces peripheral paralysis by blocking neuromuscular transmission at the postsynaptic site. Has a lower toxicity than cobrotoxin. This is Cobrotoxin-b from Naja atra (Chinese cobra).